The following is a 177-amino-acid chain: MLKDLYKSHIVPSLKTKLGYSNVMQVPKIVKVCLNIGLGIRGSDSKVMNSCVRDLALIAGQKPVATYAKKSIAGFKIRKGFPIGCKVTLRNNKMYEFLERLIHVVLPREQDFKGLSVSQFDGCGNLSIGIKEHISFLEIDYDKIDKILGVDINIVTNAVNNNDAKLLLMEFGFPFIN.

The protein belongs to the universal ribosomal protein uL5 family. Part of the 50S ribosomal subunit; part of the 5S rRNA/L5/L18/L25 subcomplex. Contacts the 5S rRNA and the P site tRNA. Forms a bridge to the 30S subunit in the 70S ribosome.

Its function is as follows. This is one of the proteins that bind and probably mediate the attachment of the 5S RNA into the large ribosomal subunit, where it forms part of the central protuberance. In the 70S ribosome it contacts protein S13 of the 30S subunit (bridge B1b), connecting the 2 subunits; this bridge is implicated in subunit movement. Contacts the P site tRNA; the 5S rRNA and some of its associated proteins might help stabilize positioning of ribosome-bound tRNAs. The chain is Large ribosomal subunit protein uL5 from Ehrlichia chaffeensis (strain ATCC CRL-10679 / Arkansas).